Consider the following 108-residue polypeptide: MKKLLVIVYPDMNDVEYTNTMVVFGFVKELQTVIYHPNLSTVKGSNGVTLVNQITSKVNLEEFDGVFIPGGMGATKVLDHDQQLLDTIRYFKDHDKYVFAICDTPNVL.

This is an uncharacterized protein from Mycoplasma pneumoniae (strain ATCC 29342 / M129 / Subtype 1) (Mycoplasmoides pneumoniae).